The sequence spans 336 residues: Potassium channel subfamily K member 1 (336 aa).

The Cytoplasmic portion of the chain corresponds to 1–20 (MLQSLAGSSCVRLVERHRSA). A helical transmembrane segment spans residues 21-41 (WCFGFLVLGYLLYLVFGAVVF). Over 42–103 (SSVELPYEDL…SNASGNWNWD (62 aa)) the chain is Extracellular. N-linked (GlcNAc...) asparagine glycosylation is present at asparagine 95. The helical intramembrane region spans 104-116 (FASALFFASTVLS). The stretch at 117 to 122 (TTGYGH) is an intramembrane region. The segment at 117-122 (TTGYGH) is selectivity filter 1. At 123 to 132 (TVPLSDGGKA) the chain is on the extracellular side. Residues 133-156 (FCIIYSVIGIPFTLLFLTAVVQRV) traverse the membrane as a helical segment. Residues 157–181 (TVHVTRRPVLYFHVRWGFSKQVVAI) are Cytoplasmic-facing. A helical transmembrane segment spans residues 182 to 202 (VHAVLLGLITVSCFFFIPAAV). The Extracellular portion of the chain corresponds to 203–211 (FSVLEDDWN). Residues 212 to 224 (FLESFYFCFISLS) constitute an intramembrane region (helical). The selectivity filter 2 stretch occupies residues 225-230 (TIGLGD). An intramembrane segment occupies 225 to 231 (TIGLGDY). The Extracellular portion of the chain corresponds to 232-243 (VPGEGYNQKFRE). Residues 244–267 (LYKIGITCYLLLGLIAMLVVLETF) form a helical membrane-spanning segment. Topologically, residues 268–336 (CELHELKKFR…SACADGPANH (69 aa)) are cytoplasmic. Residue lysine 274 forms a Glycyl lysine isopeptide (Lys-Gly) (interchain with G-Cter in SUMO) linkage. The important for intracellular retention in recycling endosomes stretch occupies residues 293–299 (IIEHDQL). The tract at residues 315 to 336 (QKQNEPFVATPSSACADGPANH) is disordered. Phosphoserine is present on serine 326.

The protein belongs to the two pore domain potassium channel (TC 1.A.1.8) family. As to quaternary structure, homodimer; disulfide-linked. Heterodimer with KCNK2; disulfide-linked. In astrocytes, forms mostly heterodimeric potassium channels with KCNK2, with only a minor proportion of functional channels containing homodimeric KCNK1. Interacts with KCNK3 and KCNK9, forming functional heterodimeric channels. Interacts with GNG4. Identified in a complex with PSD and ARF6; interacts only with PSD that is bound to ARF6. Interacts with UBE2I. Sumoylation is controversial. Sumoylated by UBE2I. Not sumoylated when expressed in xenopus oocytes or mammalian cells. Sumoylation inactivates the channel, but does not interfere with expression at the cell membrane. Sumoylation of a single subunit is sufficient to silence the dimeric channel. Sumoylation of KCNK1 is sufficient to silence heterodimeric channels formed by KCNK1 and KCNK3 or KCNK9. Desumoylated by SENP1; this activates the channel. Desumoylated by SENP1; this strongly increases halothane-mediated activation of heterodimeric channels formed with KCNK9. SENP1 treatment has no effect. In terms of tissue distribution, expressed in renal distal tubules, especially in cortical collecting duct and cortical thick ascending limb, with lower levels in the connecting tubule.

It localises to the cell membrane. It is found in the recycling endosome. Its subcellular location is the synaptic cell membrane. The protein localises to the cytoplasmic vesicle. The protein resides in the perikaryon. It localises to the cell projection. It is found in the dendrite. Its subcellular location is the apical cell membrane. It carries out the reaction K(+)(in) = K(+)(out). The catalysed reaction is NH4(+)(in) = NH4(+)(out). The enzyme catalyses Na(+)(in) = Na(+)(out). It catalyses the reaction Rb(+)(in) = Rb(+)(out). It carries out the reaction Cs(+)(in) = Cs(+)(out). The catalysed reaction is Li(+)(in) = Li(+)(out). The enzyme catalyses L-glutamate(out) = L-glutamate(in). It catalyses the reaction chloride(in) = chloride(out). In terms of biological role, ion channel that contributes to passive transmembrane potassium transport and to the regulation of the resting membrane potential in brain astrocytes, but also in kidney and in other tissues. Forms dimeric channels through which potassium ions pass in accordance with their electrochemical gradient. The channel is selective for K(+) ions at physiological potassium concentrations and at neutral pH, but becomes permeable to Na(+) at subphysiological K(+) levels and upon acidification of the extracellular medium. The homodimer has very low potassium channel activity, when expressed in heterologous systems, and can function as weakly inward rectifying potassium channel. Channel activity is modulated by activation of serotonin receptors. Heterodimeric channels containing KCNK1 and KCNK2 have much higher activity, and may represent the predominant form in astrocytes. Heterodimeric channels containing KCNK1 and KCNK3 or KCNK9 have much higher activity. Heterodimeric channels formed by KCNK1 and KCNK9 may contribute to halothane-sensitive currents. Mediates outward rectifying potassium currents in dentate gyrus granule cells and contributes to the regulation of their resting membrane potential. Contributes to the regulation of action potential firing in dentate gyrus granule cells and down-regulates their intrinsic excitability. In astrocytes, the heterodimer formed by KCNK1 and KCNK2 is required for rapid glutamate release in response to activation of G-protein coupled receptors, such as F2R and CNR1. Required for normal ion and water transport in the kidney. Contributes to the regulation of the resting membrane potential of pancreatic beta cells. The low channel activity of homodimeric KCNK1 may be due to sumoylation. The low channel activity may be due to rapid internalization from the cell membrane and retention in recycling endosomes. Permeable to monovalent cations with ion selectivity for K(+) &gt; Rb(+) &gt;&gt; NH4(+) &gt;&gt; Cs(+) = Na(+) = Li(+). This Oryctolagus cuniculus (Rabbit) protein is Potassium channel subfamily K member 1.